The primary structure comprises 122 residues: Large ribosomal subunit protein uL14 (122 aa).

It belongs to the universal ribosomal protein uL14 family. As to quaternary structure, part of the 50S ribosomal subunit. Forms a cluster with proteins L3 and L19. In the 70S ribosome, L14 and L19 interact and together make contacts with the 16S rRNA in bridges B5 and B8.

In terms of biological role, binds to 23S rRNA. Forms part of two intersubunit bridges in the 70S ribosome. This Thermomicrobium roseum (strain ATCC 27502 / DSM 5159 / P-2) protein is Large ribosomal subunit protein uL14.